A 103-amino-acid polypeptide reads, in one-letter code: Large ribosomal subunit protein bL21 (103 aa).

The protein belongs to the bacterial ribosomal protein bL21 family. As to quaternary structure, part of the 50S ribosomal subunit. Contacts protein L20.

Its function is as follows. This protein binds to 23S rRNA in the presence of protein L20. In Pectobacterium carotovorum subsp. carotovorum (strain PC1), this protein is Large ribosomal subunit protein bL21.